The primary structure comprises 374 residues: Trehalose-phosphate phosphatase B (374 aa).

It belongs to the trehalose phosphatase family. A divalent metal cation serves as cofactor. Expressed in flowers.

It catalyses the reaction alpha,alpha-trehalose 6-phosphate + H2O = alpha,alpha-trehalose + phosphate. Its pathway is glycan biosynthesis; trehalose biosynthesis. In terms of biological role, removes the phosphate from trehalose 6-phosphate to produce free trehalose. Trehalose accumulation in plant may improve abiotic stress tolerance. The protein is Trehalose-phosphate phosphatase B (TPPB) of Arabidopsis thaliana (Mouse-ear cress).